We begin with the raw amino-acid sequence, 422 residues long: 5-hydroxytryptamine receptor 1A (422 aa).

Residues 1-38 (MDVFSFGQGNNTTASQEPFGTGGNVTSISDVTFSYQVI) lie on the Extracellular side of the membrane. N-linked (GlcNAc...) asparagine glycosylation is found at Asn-10, Asn-11, and Asn-24. The chain crosses the membrane as a helical span at residues 39–59 (TSLLLGTLIFCAVLGNACVVA). The Cytoplasmic segment spans residues 60 to 73 (AIALERSLQNVANY). A helical transmembrane segment spans residues 74 to 98 (LIGSLAVTDLMVSVLVLPMAALYQV). At 99–107 (LNKWTLGQV) the chain is on the extracellular side. The chain crosses the membrane as a helical span at residues 108 to 132 (TCDLFIALDVLCCTSSILHLCAIAL). A disulfide bond links Cys-109 and Cys-187. Serotonin-binding residues include Asp-116 and Cys-120. Positions 133-135 (DRY) match the DRY motif; important for ligand-induced conformation changes motif. Residues 133-152 (DRYWAITDPIDYVNKRTPRR) lie on the Cytoplasmic side of the membrane. Residues 153 to 174 (AAALISLTWLIGFLISIPPMLG) form a helical membrane-spanning segment. At 175 to 193 (WRTPEDRSDPDACTISKDH) the chain is on the extracellular side. The helical transmembrane segment at 194–216 (GYTIYSTFGAFYIPLLLMLVLYG) threads the bilayer. Residues 217–346 (RIFRAARFRI…LARERKTVKT (130 aa)) are Cytoplasmic-facing. A disordered region spans residues 235–261 (KKGAGTSLGTSSAPPPKKSLNGQPGSG). 1D-myo-inositol 4-phosphate contacts are provided by Lys-345, Thr-346, and Gly-352. The helical transmembrane segment at 347–370 (LGIIMGTFILCWLPFFIVALVLPF) threads the bilayer. Over 371–378 (CESSCHMP) the chain is Extracellular. Residues 379-403 (ALLGAIINWLGYSNSLLNPVIYAYF) traverse the membrane as a helical segment. Positions 396 to 400 (NPVIY) match the NPxxY motif; important for ligand-induced conformation changes and signaling motif. Residues Phe-403, Asn-404, and Lys-405 each coordinate 1D-myo-inositol 4-phosphate. Residues 404-422 (NKDFQNAFKKIIKCKFCRR) lie on the Cytoplasmic side of the membrane.

Belongs to the G-protein coupled receptor 1 family. 5-hydroxytryptamine receptor subfamily. HTR1A sub-subfamily. In terms of assembly, heterodimer; heterodimerizes with GPER1. Interacts with YIF1B. Interacts with GPR39 and GALR1. As to expression, detected in hypothalamus, mesencephalon, amygdala, medulla, thalamus, septum and hippocampus.

The protein resides in the cell membrane. It localises to the cell projection. The protein localises to the dendrite. Its activity is regulated as follows. G-protein coupled receptor activity is regulated by lipids: phosphatidylinositol 4-phosphate increases HTR1A-mediated activity. Its function is as follows. G-protein coupled receptor for 5-hydroxytryptamine (serotonin). Also functions as a receptor for various drugs and psychoactive substances. Ligand binding causes a conformation change that triggers signaling via guanine nucleotide-binding proteins (G proteins) and modulates the activity of downstream effectors, such as adenylate cyclase. HTR1A is coupled to G(i)/G(o) G alpha proteins and mediates inhibitory neurotransmission: signaling inhibits adenylate cyclase activity and activates a phosphatidylinositol-calcium second messenger system that regulates the release of Ca(2+) ions from intracellular stores. Beta-arrestin family members regulate signaling by mediating both receptor desensitization and resensitization processes. The polypeptide is 5-hydroxytryptamine receptor 1A (Rattus norvegicus (Rat)).